The chain runs to 449 residues: Deoxyguanosinetriphosphate triphosphohydrolase-like protein (449 aa).

The disordered stretch occupies residues M1 to R27. Residues Q7–R27 show a composition bias toward basic and acidic residues. An HD domain is found at R59 to A255.

It belongs to the dGTPase family. Type 2 subfamily.

In Shewanella baltica (strain OS195), this protein is Deoxyguanosinetriphosphate triphosphohydrolase-like protein.